The sequence spans 282 residues: Bifunctional protein FolD (282 aa).

NADP(+) is bound by residues 165-167 (NRS), serine 190, and isoleucine 231.

The protein belongs to the tetrahydrofolate dehydrogenase/cyclohydrolase family. Homodimer.

The enzyme catalyses (6R)-5,10-methylene-5,6,7,8-tetrahydrofolate + NADP(+) = (6R)-5,10-methenyltetrahydrofolate + NADPH. It carries out the reaction (6R)-5,10-methenyltetrahydrofolate + H2O = (6R)-10-formyltetrahydrofolate + H(+). Its pathway is one-carbon metabolism; tetrahydrofolate interconversion. Functionally, catalyzes the oxidation of 5,10-methylenetetrahydrofolate to 5,10-methenyltetrahydrofolate and then the hydrolysis of 5,10-methenyltetrahydrofolate to 10-formyltetrahydrofolate. The chain is Bifunctional protein FolD from Clostridium botulinum (strain Okra / Type B1).